The chain runs to 484 residues: RxLR effector protein PexRD18 (484 aa).

Positions 1-20 (MSHQRILLLLMAAFFAWVSA) are cleaved as a signal peptide. The RxLR-dEER motif lies at 55–79 (RFLRLYDAEVRDTVRGDNDVDREER).

This sequence belongs to the RxLR effector family.

It localises to the secreted. The protein localises to the host cell membrane. Functionally, effector that enhances P.infestans colonization of Nicotiana benthamiana leaves. The protein is RxLR effector protein PexRD18 of Phytophthora infestans (strain T30-4) (Potato late blight agent).